We begin with the raw amino-acid sequence, 201 residues long: Glutathione peroxidase 1 (201 aa).

S32 is subject to Phosphoserine. The active site involves U47. A non-standard amino acid (selenocysteine) is located at residue U47. An N6-acetyllysine; alternate mark is found at K86, K112, and K146. N6-succinyllysine; alternate is present on residues K86, K112, and K146. Residues S195 and S199 each carry the phosphoserine modification.

Belongs to the glutathione peroxidase family. As to quaternary structure, homotetramer. Interacts with MIEN1. In terms of processing, during periods of oxidative stress, Sec-47 may react with a superoxide radical, irreversibly lose hydroselenide and be converted to dehydroalanine.

It is found in the cytoplasm. The protein resides in the mitochondrion. It catalyses the reaction 2 glutathione + H2O2 = glutathione disulfide + 2 H2O. The catalysed reaction is a hydroperoxy polyunsaturated fatty acid + 2 glutathione = a hydroxy polyunsaturated fatty acid + glutathione disulfide + H2O. It carries out the reaction tert-butyl hydroperoxide + 2 glutathione = tert-butanol + glutathione disulfide + H2O. The enzyme catalyses cumene hydroperoxide + 2 glutathione = 2-phenylpropan-2-ol + glutathione disulfide + H2O. It catalyses the reaction (13S)-hydroperoxy-(9Z,11E)-octadecadienoate + 2 glutathione = (13S)-hydroxy-(9Z,11E)-octadecadienoate + glutathione disulfide + H2O. The catalysed reaction is (9S)-hydroperoxy-(10E,12Z)-octadecadienoate + 2 glutathione = (9S)-hydroxy-(10E,12Z)-octadecadienoate + glutathione disulfide + H2O. It carries out the reaction (5S)-hydroperoxy-(6E,8Z,11Z,14Z)-eicosatetraenoate + 2 glutathione = (5S)-hydroxy-(6E,8Z,11Z,14Z)-eicosatetraenoate + glutathione disulfide + H2O. The enzyme catalyses (12S)-hydroperoxy-(5Z,8Z,10E,14Z)-eicosatetraenoate + 2 glutathione = (12S)-hydroxy-(5Z,8Z,10E,14Z)-eicosatetraenoate + glutathione disulfide + H2O. It catalyses the reaction (12R)-hydroperoxy-(5Z,8Z,10E,14Z)-eicosatetraenoate + 2 glutathione = (12R)-hydroxy-(5Z,8Z,10E,14Z)-eicosatetraenoate + glutathione disulfide + H2O. The catalysed reaction is (15S)-hydroperoxy-(5Z,8Z,11Z,13E)-eicosatetraenoate + 2 glutathione = (15S)-hydroxy-(5Z,8Z,11Z,13E)-eicosatetraenoate + glutathione disulfide + H2O. It carries out the reaction (5S)-hydroperoxy-(6E,8Z,11Z,14Z,17Z)-eicosapentaenoate + 2 glutathione = (5S)-hydroxy-(6E,8Z,11Z,14Z,17Z)-eicosapentaenoate + glutathione disulfide + H2O. The enzyme catalyses (12S)-hydroperoxy-(5Z,8Z,10E,14Z,17Z)-eicosapentaenoate + 2 glutathione = (12S)-hydroxy-(5Z,8Z,10E,14Z,17Z)-eicosapentaenoate + glutathione disulfide + H2O. It catalyses the reaction (15S)-hydroperoxy-(5Z,8Z,11Z,13E,17Z)-eicosapentaenoate + 2 glutathione = (15S)-hydroxy-(5Z,8Z,11Z,13E,17Z)-eicosapentaenoate + glutathione disulfide + H2O. The catalysed reaction is (15S)-hydroperoxy-(11Z,13E)-eicosadienoate + 2 glutathione = (15S)-hydroxy-(11Z,13E)-eicosadienoate + glutathione disulfide + H2O. It carries out the reaction (17S)-hydroperoxy-(4Z,7Z,10Z,13Z,15E,19Z)-docosahexaenoate + 2 glutathione = (17S)-hydroxy-(4Z,7Z,10Z,13Z,15E,19Z)-docosahexaenoate + glutathione disulfide + H2O. Catalyzes the reduction of hydroperoxides in a glutathione-dependent manner thus regulating cellular redox homeostasis. Can reduce small soluble hydroperoxides such as H2O2, cumene hydroperoxide and tert-butyl hydroperoxide, as well as several fatty acid-derived hydroperoxides. In platelets catalyzes the reduction of 12-hydroperoxyeicosatetraenoic acid, the primary product of the arachidonate 12-lipoxygenase pathway. The polypeptide is Glutathione peroxidase 1 (GPX1) (Pongo pygmaeus (Bornean orangutan)).